The primary structure comprises 486 residues: PTS system N-acetylmuramic acid-specific EIIBC component (486 aa).

The PTS EIIB type-1 domain maps to 1–89 (MAKITQTMIS…NKLIESVING (89 aa)). The Phosphocysteine intermediate; for EIIB activity role is filled by Cys-28. Residues 127 to 486 (SKFATIFTPL…FFGSKDVDLS (360 aa)) form the PTS EIIC type-1 domain. Transmembrane regions (helical) follow at residues 129–149 (FATI…LLGF), 170–190 (LIAY…ILIG), 196–216 (AFGG…LGYN), 230–250 (FFGY…AAII), 268–288 (MILT…VVIM), 312–332 (AAIL…QGFV), 347–367 (LFPI…ALYF), 381–401 (GAII…VTLP), 411–431 (IGGA…LPVG), and 453–473 (IFAG…VGFL).

Its subcellular location is the cell inner membrane. The catalysed reaction is N-acetyl-beta-D-muramate(out) + N(pros)-phospho-L-histidyl-[protein] = N-acetyl-beta-D-muramate 6-phosphate(in) + L-histidyl-[protein]. Functionally, the phosphoenolpyruvate-dependent sugar phosphotransferase system (sugar PTS), a major carbohydrate active transport system, catalyzes the phosphorylation of incoming sugar substrates concomitantly with their translocation across the cell membrane. This system is involved in N-acetylmuramic acid (MurNAc) transport, yielding cytoplasmic MurNAc-6-P. Is also able to take up anhydro-N-acetylmuramic acid (anhMurNAc), but cannot phosphorylate the carbon 6, probably because of the 1,6-anhydro ring. In Vibrio vulnificus (strain CMCP6), this protein is PTS system N-acetylmuramic acid-specific EIIBC component (murP).